A 287-amino-acid polypeptide reads, in one-letter code: Ribosomal RNA small subunit methyltransferase A (287 aa).

Residues Asn-28, Leu-30, Gly-55, Glu-76, Asp-101, and Asn-125 each coordinate S-adenosyl-L-methionine.

The protein belongs to the class I-like SAM-binding methyltransferase superfamily. rRNA adenine N(6)-methyltransferase family. RsmA subfamily.

The protein localises to the cytoplasm. The catalysed reaction is adenosine(1518)/adenosine(1519) in 16S rRNA + 4 S-adenosyl-L-methionine = N(6)-dimethyladenosine(1518)/N(6)-dimethyladenosine(1519) in 16S rRNA + 4 S-adenosyl-L-homocysteine + 4 H(+). Functionally, specifically dimethylates two adjacent adenosines (A1518 and A1519) in the loop of a conserved hairpin near the 3'-end of 16S rRNA in the 30S particle. May play a critical role in biogenesis of 30S subunits. The sequence is that of Ribosomal RNA small subunit methyltransferase A from Alkaliphilus oremlandii (strain OhILAs) (Clostridium oremlandii (strain OhILAs)).